The sequence spans 307 residues: Aspartate carbamoyltransferase catalytic subunit (307 aa).

The carbamoyl phosphate site is built by R55 and T56. K85 serves as a coordination point for L-aspartate. Carbamoyl phosphate-binding residues include R106, H135, and Q138. L-aspartate-binding residues include R168 and R230. Carbamoyl phosphate-binding residues include L268 and P269.

The protein belongs to the aspartate/ornithine carbamoyltransferase superfamily. ATCase family. Heterododecamer (2C3:3R2) of six catalytic PyrB chains organized as two trimers (C3), and six regulatory PyrI chains organized as three dimers (R2).

The catalysed reaction is carbamoyl phosphate + L-aspartate = N-carbamoyl-L-aspartate + phosphate + H(+). Its pathway is pyrimidine metabolism; UMP biosynthesis via de novo pathway; (S)-dihydroorotate from bicarbonate: step 2/3. Functionally, catalyzes the condensation of carbamoyl phosphate and aspartate to form carbamoyl aspartate and inorganic phosphate, the committed step in the de novo pyrimidine nucleotide biosynthesis pathway. This chain is Aspartate carbamoyltransferase catalytic subunit, found in Photorhabdus laumondii subsp. laumondii (strain DSM 15139 / CIP 105565 / TT01) (Photorhabdus luminescens subsp. laumondii).